The following is a 304-amino-acid chain: Fluoroacetate dehalogenase (304 aa).

An AB hydrolase-1 domain is found at 26-151; that stretch reads PALLLLHGFP…FVARAYWHWY (126 aa). D104 (nucleophile) is an active-site residue. Fluoroacetate contacts are provided by R105, R108, H149, W150, and Y212. H271 serves as the catalytic Proton acceptor.

This sequence belongs to the AB hydrolase superfamily. Epoxide hydrolase family. As to quaternary structure, homodimer.

It catalyses the reaction a haloacetate + H2O = a halide anion + glycolate + H(+). The enzyme catalyses fluoroacetate + H2O = fluoride + glycolate + H(+). Its function is as follows. Catalyzes the hydrolytic defluorination of fluoroacetate to produce glycolate. Has only very low activity towards chloroacetate and bromoacetate. The protein is Fluoroacetate dehalogenase (fac-dex) of Burkholderia sp.